We begin with the raw amino-acid sequence, 186 residues long: ATP synthase subunit delta (186 aa).

The protein belongs to the ATPase delta chain family. In terms of assembly, F-type ATPases have 2 components, F(1) - the catalytic core - and F(0) - the membrane proton channel. F(1) has five subunits: alpha(3), beta(3), gamma(1), delta(1), epsilon(1). CF(0) has four main subunits: a(1), b(1), b'(1) and c(10-14). The alpha and beta chains form an alternating ring which encloses part of the gamma chain. F(1) is attached to F(0) by a central stalk formed by the gamma and epsilon chains, while a peripheral stalk is formed by the delta, b and b' chains.

It localises to the cell inner membrane. Its function is as follows. F(1)F(0) ATP synthase produces ATP from ADP in the presence of a proton or sodium gradient. F-type ATPases consist of two structural domains, F(1) containing the extramembraneous catalytic core and F(0) containing the membrane proton channel, linked together by a central stalk and a peripheral stalk. During catalysis, ATP synthesis in the catalytic domain of F(1) is coupled via a rotary mechanism of the central stalk subunits to proton translocation. In terms of biological role, this protein is part of the stalk that links CF(0) to CF(1). It either transmits conformational changes from CF(0) to CF(1) or is implicated in proton conduction. This Rhodopseudomonas palustris (strain BisA53) protein is ATP synthase subunit delta.